The chain runs to 185 residues: Probable E3 ubiquitin-protein ligase ATL44 (185 aa).

The chain crosses the membrane as a helical span at residues 29 to 49 (VVILSALLCALICVAGLAAVV). The segment at 102-144 (CAICLTDFADGEEIRVLPLCGHSFHVECIDKWLVSRSSCPSCR) adopts an RING-type; atypical zinc-finger fold. The disordered stretch occupies residues 163–185 (MKDQAHRHQHHQHSSTTIPTFLP). Residues 176–185 (SSTTIPTFLP) show a composition bias toward polar residues.

The protein belongs to the RING-type zinc finger family. ATL subfamily. As to quaternary structure, interacts with BIK1. Post-translationally, auto-monoubiquitination. Expressed in stems, flowers and green siliques.

The protein localises to the membrane. The enzyme catalyses S-ubiquitinyl-[E2 ubiquitin-conjugating enzyme]-L-cysteine + [acceptor protein]-L-lysine = [E2 ubiquitin-conjugating enzyme]-L-cysteine + N(6)-ubiquitinyl-[acceptor protein]-L-lysine.. Its pathway is protein modification; protein ubiquitination. Its function is as follows. E3 ubiquitin-protein ligase that possess E3 ubiquitin ligase activity in vitro and mediates protein monoubiquitination. Triggers the monoubiquitination of phosphorylated BIK1 in response to pathogen-associated molecular pattern (PAMP) detection. This is Probable E3 ubiquitin-protein ligase ATL44 from Arabidopsis thaliana (Mouse-ear cress).